An 859-amino-acid polypeptide reads, in one-letter code: Alanine--tRNA ligase (859 aa).

4 residues coordinate Zn(2+): His-562, His-566, Cys-664, and His-668.

Belongs to the class-II aminoacyl-tRNA synthetase family. The cofactor is Zn(2+).

The protein resides in the cytoplasm. The enzyme catalyses tRNA(Ala) + L-alanine + ATP = L-alanyl-tRNA(Ala) + AMP + diphosphate. Functionally, catalyzes the attachment of alanine to tRNA(Ala) in a two-step reaction: alanine is first activated by ATP to form Ala-AMP and then transferred to the acceptor end of tRNA(Ala). Also edits incorrectly charged Ser-tRNA(Ala) and Gly-tRNA(Ala) via its editing domain. The polypeptide is Alanine--tRNA ligase (Aliivibrio fischeri (strain ATCC 700601 / ES114) (Vibrio fischeri)).